Here is a 473-residue protein sequence, read N- to C-terminus: MNAAVIDSHSAQDYVVADIALAGWGRKELNIAETEMPGLVQIRDEYKAQQPLKGARIAGSLHMTIQTGVLIETLKALGADVRWASCNIFSTQDHAAAAIVEAGTPVFAFKGESLDEYWEFSHRIFEWPNGEFANMILDDGGDATLLLILGSKAEKDRSVIARPTNEEEVALFKSIERHLEIDGSWYSKRLAHIKGVTEETTTGVHRLYQMEKDGRLPFPAFNVNDSVTKSKFDNLYGCRESLVDGIKRATDVMIAGKIAVVAGYGDVGKGCAQSLRGLGATVWVTEIDPICALQAAMEGYRVVTMEYAADKADIFVTATGNYHVINHDHMKAMRHNAIVCNIGHFDSEIDVASTRQYQWENIKPQVDHIIFPDGKRVILLAEGRLVNLGCATGHPSFVMSNSFTNQTLAQIELFTRGGEYANKVYVLPKHLDEKVARLHLARIGAQLSELSDDQAAYIGVSKAGPFKPDHYRY.

The substrate site is built by threonine 64, aspartate 139, and glutamate 199. 200 to 202 (TTT) contributes to the NAD(+) binding site. Residues lysine 229 and aspartate 233 each coordinate substrate. Residues asparagine 234, 263-268 (GYGDVG), glutamate 286, asparagine 321, 342-344 (IGH), and asparagine 387 contribute to the NAD(+) site.

It belongs to the adenosylhomocysteinase family. It depends on NAD(+) as a cofactor.

It is found in the cytoplasm. It catalyses the reaction S-adenosyl-L-homocysteine + H2O = L-homocysteine + adenosine. The protein operates within amino-acid biosynthesis; L-homocysteine biosynthesis; L-homocysteine from S-adenosyl-L-homocysteine: step 1/1. May play a key role in the regulation of the intracellular concentration of adenosylhomocysteine. This is Adenosylhomocysteinase from Burkholderia mallei (strain SAVP1).